Here is an 836-residue protein sequence, read N- to C-terminus: Glutamate receptor ionotropic, kainate glr-3 (836 aa).

Residues 1 to 19 (MFWIAKTLIAFLILLKTDC) form the signal peptide. Residues 20–523 (YKIAIPANLI…WFKFMDPLST (504 aa)) lie on the Extracellular side of the membrane. A disulfide bond links Cys76 and Cys320. 5 N-linked (GlcNAc...) asparagine glycosylation sites follow: Asn225, Asn257, Asn356, Asn391, and Asn419. L-glutamate contacts are provided by residues 478–480 (SLT) and Arg485. Residues 524 to 544 (QVWIMTFASYFVVSVAIWIIA) traverse the membrane as a helical segment. At 545 to 600 (KISPYEQFERDEDNGQYKPVDNQFSLRNSFWFTVCSLMQQGSELCPRAASTRLLTG) the chain is on the cytoplasmic side. Residues 601-621 (IWWFFALILISSYTANLAAVL) form a helical membrane-spanning segment. The Extracellular portion of the chain corresponds to 622–780 (TTRRMETPIE…KRKDQDDGES (159 aa)). 651-652 (ST) is a binding site for L-glutamate. The N-linked (GlcNAc...) asparagine glycan is linked to Asn657. Residue Glu699 participates in L-glutamate binding. A helical membrane pass occupies residues 781 to 801 (IGGIFIILVVGLVLTAVLVIF). The Cytoplasmic portion of the chain corresponds to 802–836 (ELITTRKPSPAQSQVIRHVNVIPSFKLGFFRWNVN).

The protein belongs to the glutamate-gated ion channel (TC 1.A.10.1) family. As to expression, expressed in the intestine and in the ASER neuron. Also expressed in the thermosensitive RIA interneuron.

The protein localises to the cell membrane. It localises to the postsynaptic cell membrane. Its activity is regulated as follows. Activated by low temperature of 18 degrees Celsius in ASER neuron. Its function is as follows. Ionotropic glutamate receptor. Activation by glutamate requires additional verification. L-glutamate acts as an excitatory neurotransmitter at many synapses in the central nervous system. Binding of the excitatory neurotransmitter L-glutamate induces a conformation change, leading to the opening of the cation channel, and thereby converts the chemical signal to an electrical impulse. The receptor then desensitizes rapidly and enters a transient inactive state, characterized by the presence of bound agonist. Functionally, independent of its ionotropic glutamate receptor activity, acts as a thermoreceptor in the ASER neuron where it triggers a calcium response to activate cold avoidance behavior in response to temperatures below 19 degrees Celsius. Possibly functions as a metabotropic cold receptor and acts upstream of the G(o) G protein goa-1 in the ASER neuron. Also functions in cold sensing in the intestine. The protein is Glutamate receptor ionotropic, kainate glr-3 of Caenorhabditis elegans.